The primary structure comprises 513 residues: Probable DNA primase large subunit (513 aa).

The [4Fe-4S] cluster site is built by Cys-315, Cys-398, Cys-415, and Cys-457.

The protein belongs to the eukaryotic-type primase large subunit family. Heterodimer of a small subunit and a large subunit. [4Fe-4S] cluster serves as cofactor.

Functionally, DNA primase is the polymerase that synthesizes small RNA primers for the Okazaki fragments made during discontinuous DNA replication. The chain is Probable DNA primase large subunit from Neurospora crassa (strain ATCC 24698 / 74-OR23-1A / CBS 708.71 / DSM 1257 / FGSC 987).